A 607-amino-acid polypeptide reads, in one-letter code: MSKIIGIDLGTTNSCVAVMEGGSATIIPNSEGARTTPSVVNIKDNGEVVVGEIAKRQAVTNPTSTVSSIKTHMGSDYKVEIFGKKYTPQEISAKTLQKLKKDAEAYLGEEVKEAVITVPAYFTDSQRQATKDAGTIAGLDVKRIINEPTAAALAYGLEKKKEEKVLVFDLGGGTFDVSVLEISDGVIEVISTAGNNHLGGDDFDNEIINWLVAEFKKETGIDLSNDKMAYQRLKDAAEKAKKELSTLMETSISLPFITMDATGPKHLEMKLTRAKFNDLTKHLVEATQGPTKTALKDASLEANQIDEILLVGGSTRIPAVQEWVENFFGKKPNKGINPDEVVAAGAAIQGGVLMGDVKDVLLLDVTPLSLGIETLGGVFTKMIEKNTTIPVKKSQVYSTAVDNQPAVTINVLQGERSRATDNHKLGEFNLEGIPAAPRGVPQIEVTFDIDANGIVHVSAKDLGTGKENKVTISGSSNLSKEEIERMTKEAEAHAEEDKKFQELVEARNKADQLISATEKTLKENPDKVSEEDKKNIEAAIEELKKVKDGDDKSAIDSAMEKLSQASHKFAEELYKEVQAQAQAQQQAGANAGSDKKDEDVAEAEVVD.

Threonine 174 bears the Phosphothreonine; by autocatalysis mark. Over residues 579 to 592 (AQAQAQQQAGANAG) the composition is skewed to low complexity. The disordered stretch occupies residues 579–607 (AQAQAQQQAGANAGSDKKDEDVAEAEVVD).

It belongs to the heat shock protein 70 family.

Its function is as follows. Acts as a chaperone. This Fusobacterium nucleatum subsp. nucleatum (strain ATCC 25586 / DSM 15643 / BCRC 10681 / CIP 101130 / JCM 8532 / KCTC 2640 / LMG 13131 / VPI 4355) protein is Chaperone protein DnaK.